Reading from the N-terminus, the 638-residue chain is LIM domain kinase 2 (638 aa).

LIM zinc-binding domains lie at 12–63 and 72–124; these read CRGC…CHKD and CHGC…CGKC. One can recognise a PDZ domain in the interval 152 to 239; that stretch reads LISMPATTEC…TLQLLIEHDP (88 aa). The residue at position 210 (Thr210) is a Phosphothreonine. Polar residues predominate over residues 257–266; it reads MQSSGHTLML. Residues 257-304 are disordered; it reads MQSSGHTLMLSTLDAKENQEGTLRRRSLRRSNSISKSPGPSSPKEPLL. The segment covering 270-279 has biased composition (basic and acidic residues); it reads DAKENQEGTL. Positions 286–304 are enriched in low complexity; sequence RSNSISKSPGPSSPKEPLL. Residues Ser293 and Ser298 each carry the phosphoserine modification. The Protein kinase domain occupies 331–608; that stretch reads LIHGEVLGKG…DSFEALSLFL (278 aa). ATP contacts are provided by residues 337–345 and Lys360; that span reads LGKGFFGQA. Asp451 is an active-site residue. At Thr505 the chain carries Phosphothreonine; by ROCK1 and CDC42BP.

The protein belongs to the protein kinase superfamily. TKL Ser/Thr protein kinase family. In terms of assembly, binds ROCK1 and MARF1. Interacts with NISCH. Post-translationally, phosphorylated on serine and/or threonine residues by ROCK1. Found in various tissues at moderate levels, except for testis, which shows very low expression.

It localises to the cytoplasm. The protein resides in the nucleus. It is found in the perinuclear region. The protein localises to the cytoskeleton. Its subcellular location is the spindle. It localises to the microtubule organizing center. The protein resides in the centrosome. The enzyme catalyses L-seryl-[protein] + ATP = O-phospho-L-seryl-[protein] + ADP + H(+). It carries out the reaction L-threonyl-[protein] + ATP = O-phospho-L-threonyl-[protein] + ADP + H(+). Functionally, serine/threonine-protein kinase that plays an essential role in the regulation of actin filament dynamics. Acts downstream of several Rho family GTPase signal transduction pathways. Involved in astral microtubule organization and mitotic spindle orientation during early stages of mitosis by mediating phosphorylation of TPPP. Displays serine/threonine-specific phosphorylation of myelin basic protein and histone (MBP) in vitro. Suppresses ciliogenesis via multiple pathways; phosphorylation of CFL1, directional trafficking of ciliary vesicles to the ciliary base, and by facilitating YAP1 nuclear localization where it acts as a transcriptional corepressor of the TEAD4 target genes AURKA and PLK1. The chain is LIM domain kinase 2 (Limk2) from Rattus norvegicus (Rat).